The primary structure comprises 109 residues: UPF0122 protein Cbei_1174 (109 aa).

This sequence belongs to the UPF0122 family.

Functionally, might take part in the signal recognition particle (SRP) pathway. This is inferred from the conservation of its genetic proximity to ftsY/ffh. May be a regulatory protein. In Clostridium beijerinckii (strain ATCC 51743 / NCIMB 8052) (Clostridium acetobutylicum), this protein is UPF0122 protein Cbei_1174.